The primary structure comprises 94 residues: Integration host factor subunit beta (94 aa).

Belongs to the bacterial histone-like protein family. As to quaternary structure, heterodimer of an alpha and a beta chain.

Its function is as follows. This protein is one of the two subunits of integration host factor, a specific DNA-binding protein that functions in genetic recombination as well as in transcriptional and translational control. This chain is Integration host factor subunit beta, found in Photorhabdus laumondii subsp. laumondii (strain DSM 15139 / CIP 105565 / TT01) (Photorhabdus luminescens subsp. laumondii).